Here is a 432-residue protein sequence, read N- to C-terminus: Glutamyl-tRNA reductase (432 aa).

Residues 49-52 (TCNR), Ser-101, 106-108 (EPQ), and Gln-112 contribute to the substrate site. Cys-50 (nucleophile) is an active-site residue. Residue 181–186 (GAGETI) participates in NADP(+) binding. The segment at 408–432 (PEKPGYRHPPVATPIVRTDDANPAP) is disordered.

This sequence belongs to the glutamyl-tRNA reductase family. As to quaternary structure, homodimer.

The enzyme catalyses (S)-4-amino-5-oxopentanoate + tRNA(Glu) + NADP(+) = L-glutamyl-tRNA(Glu) + NADPH + H(+). It participates in porphyrin-containing compound metabolism; protoporphyrin-IX biosynthesis; 5-aminolevulinate from L-glutamyl-tRNA(Glu): step 1/2. Catalyzes the NADPH-dependent reduction of glutamyl-tRNA(Glu) to glutamate 1-semialdehyde (GSA). This Xanthomonas campestris pv. campestris (strain B100) protein is Glutamyl-tRNA reductase.